A 193-amino-acid chain; its full sequence is Large ribosomal subunit protein uL5 (193 aa).

Belongs to the universal ribosomal protein uL5 family. In terms of assembly, part of the 50S ribosomal subunit; part of the 5S rRNA/L5/L18/L25 subcomplex. Contacts the 5S rRNA and the P site tRNA. Forms a bridge to the 30S subunit in the 70S ribosome.

In terms of biological role, this is one of the proteins that bind and probably mediate the attachment of the 5S RNA into the large ribosomal subunit, where it forms part of the central protuberance. In the 70S ribosome it contacts protein S13 of the 30S subunit (bridge B1b), connecting the 2 subunits; this bridge is implicated in subunit movement. Contacts the P site tRNA; the 5S rRNA and some of its associated proteins might help stabilize positioning of ribosome-bound tRNAs. This Pseudarthrobacter chlorophenolicus (strain ATCC 700700 / DSM 12829 / CIP 107037 / JCM 12360 / KCTC 9906 / NCIMB 13794 / A6) (Arthrobacter chlorophenolicus) protein is Large ribosomal subunit protein uL5.